The sequence spans 437 residues: GTPase Obg (437 aa).

Residues 2–160 form the Obg domain; it reads SMFLDTAKIK…RNLELELKVL (159 aa). Positions 161-338 constitute an OBG-type G domain; the sequence is ADVGLVGFPS…LLEATAELLE (178 aa). GTP is bound by residues 167–174, 192–196, 214–217, 284–287, and 319–321; these read GFPSVGKS, FTTIV, DLPG, NKMD, and SGI. The Mg(2+) site is built by serine 174 and threonine 194. Residues 359–437 enclose the OCT domain; it reads GFNPDEPEFA…IGKFEFEFVD (79 aa).

This sequence belongs to the TRAFAC class OBG-HflX-like GTPase superfamily. OBG GTPase family. In terms of assembly, monomer. It depends on Mg(2+) as a cofactor.

Its subcellular location is the cytoplasm. An essential GTPase which binds GTP, GDP and possibly (p)ppGpp with moderate affinity, with high nucleotide exchange rates and a fairly low GTP hydrolysis rate. Plays a role in control of the cell cycle, stress response, ribosome biogenesis and in those bacteria that undergo differentiation, in morphogenesis control. The sequence is that of GTPase Obg from Streptococcus suis (strain 05ZYH33).